The chain runs to 252 residues: Hsp70-Hsp90 organising protein (252 aa).

TPR repeat units follow at residues 7–40, 41–74, and 75–108; these read AQRLKELGNKCFQEGKYEEAVKYFSDAITNDPLD, HVLYSNLSGAFASLGRFYEALESANKCISIKKDW, and PKGYIRKGCAEHGLRQLSNAEKTYLEGLKIDPNN. Residues 197-239 adopt a coiled-coil conformation; sequence EGNDAEERQRQQREEEERRKKKEEEERKKKEEEEMKKQNRTPE. The segment at 199–252 is disordered; sequence NDAEERQRQQREEEERRKKKEEEERKKKEEEEMKKQNRTPEQIQGDEHKLKVMN. Composition is skewed to basic and acidic residues over residues 201–233 and 243–252; these read AEERQRQQREEEERRKKKEEEERKKKEEEEMKK and GDEHKLKVMN.

Monomer. Homodimer. Forms a complex composed of HOP and chaperones HSP70 and HSP90; the interaction is stronger in the absence of ATP. Interacts (via TPR 1, 2, 3, 7, 8 and 9 repeats) with HSP70 (via C-terminus); the interaction is direct and is stronger in the absence of ATP. Interacts (via TPR 4, 5 and 6 repeats) with HSP90 (via C-terminus); the interaction is direct.

The protein localises to the cytoplasm. Functionally, acts as a co-chaperone and mediates the association of the chaperones HSP70 and HSP90 probably facilitating substrate transfer from HSP70 to HSP90. Stimulates HSP70 ATPase activity and, in contrast, inhibits HSP90 ATPase activity. The chain is Hsp70-Hsp90 organising protein from Plasmodium falciparum.